A 241-amino-acid polypeptide reads, in one-letter code: Chalcone--flavanone isomerase C (241 aa).

Residues Thr-50, Asn-115, and Ser-192 each coordinate substrate.

Belongs to the chalcone isomerase family.

It carries out the reaction a chalcone = a flavanone.. It functions in the pathway secondary metabolite biosynthesis; flavonoid biosynthesis. In terms of biological role, catalyzes the intramolecular cyclization of bicyclic chalcones into tricyclic (S)-flavanones. Responsible for the isomerization of 4,2',4',6'-tetrahydroxychalcone (also termed chalcone) into naringenin. The chain is Chalcone--flavanone isomerase C (CHI3) from Petunia hybrida (Petunia).